The following is a 79-amino-acid chain: Conotoxin 8 (79 aa).

Residues 1-22 form the signal peptide; the sequence is MKLTCVLIITVLFLTASQLITA. A propeptide spanning residues 23 to 47 is cleaved from the precursor; sequence DYSRGQRQYRAVRLGDEMRNFKGAR. 3 disulfide bridges follow: Cys-49-Cys-62, Cys-56-Cys-67, and Cys-61-Cys-77.

The protein belongs to the conotoxin O1 superfamily. In terms of tissue distribution, expressed by the venom duct.

It is found in the secreted. The protein is Conotoxin 8 of Conus vexillum (Flag cone).